The primary structure comprises 393 residues: NAD(P)H-quinone oxidoreductase subunit H, chloroplastic (393 aa).

Belongs to the complex I 49 kDa subunit family. As to quaternary structure, NDH is composed of at least 16 different subunits, 5 of which are encoded in the nucleus.

The protein localises to the plastid. It is found in the chloroplast thylakoid membrane. It catalyses the reaction a plastoquinone + NADH + (n+1) H(+)(in) = a plastoquinol + NAD(+) + n H(+)(out). The catalysed reaction is a plastoquinone + NADPH + (n+1) H(+)(in) = a plastoquinol + NADP(+) + n H(+)(out). In terms of biological role, NDH shuttles electrons from NAD(P)H:plastoquinone, via FMN and iron-sulfur (Fe-S) centers, to quinones in the photosynthetic chain and possibly in a chloroplast respiratory chain. The immediate electron acceptor for the enzyme in this species is believed to be plastoquinone. Couples the redox reaction to proton translocation, and thus conserves the redox energy in a proton gradient. This chain is NAD(P)H-quinone oxidoreductase subunit H, chloroplastic, found in Sorghum bicolor (Sorghum).